A 175-amino-acid chain; its full sequence is Ribonuclease M5 (175 aa).

The Toprim domain occupies Asn3–Ser83. Mg(2+) contacts are provided by Glu9, Asp57, and Asp59.

Belongs to the ribonuclease M5 family. Mg(2+) serves as cofactor.

The protein resides in the cytoplasm. The catalysed reaction is Endonucleolytic cleavage of RNA, removing 21 and 42 nucleotides, respectively, from the 5'- and 3'-termini of a 5S-rRNA precursor.. Functionally, required for correct processing of both the 5' and 3' ends of 5S rRNA precursor. Cleaves both sides of a double-stranded region yielding mature 5S rRNA in one step. This chain is Ribonuclease M5, found in Mesoplasma florum (strain ATCC 33453 / NBRC 100688 / NCTC 11704 / L1) (Acholeplasma florum).